A 50-amino-acid chain; its full sequence is ELCEKASKTWSGNCGNTGHCDNQCKSWEGAAHGACHVRNGKHMCFCYFNC.

Intrachain disulfides connect cysteine 3/cysteine 50, cysteine 14/cysteine 35, cysteine 20/cysteine 44, and cysteine 24/cysteine 46.

The protein belongs to the DEFL family.

The protein resides in the secreted. Its function is as follows. Possesses antimicrobial activity sensitive to inorganic cations. Has no inhibitory effect on insect gut alpha-amylase. Induces potential changes in fungal membranes and increased K+ efflux and Ca(2+) uptake. Interacts with sphingolipids and ergosterols found in fungal plasma membranes. The chain is Defensin-like protein 1 from Dahlia merckii (Bedding dahlia).